Reading from the N-terminus, the 130-residue chain is ATP synthase epsilon chain, chloroplastic (130 aa).

It belongs to the ATPase epsilon chain family. In terms of assembly, F-type ATPases have 2 components, CF(1) - the catalytic core - and CF(0) - the membrane proton channel. CF(1) has five subunits: alpha(3), beta(3), gamma(1), delta(1), epsilon(1). CF(0) has three main subunits: a, b and c.

Its subcellular location is the plastid. The protein resides in the chloroplast thylakoid membrane. In terms of biological role, produces ATP from ADP in the presence of a proton gradient across the membrane. In Tupiella akineta (Green alga), this protein is ATP synthase epsilon chain, chloroplastic.